A 412-amino-acid chain; its full sequence is Protein BTN1 (412 aa).

Positions 1 to 29 (MDRRKLIFGKFWLFGLLNNVLYVVILAAA) are cleaved as a signal peptide. 9 consecutive transmembrane segments (helical) span residues 41-61 (LILLADILPSFLVKLVAPFFI), 70-90 (IWSLIALSGFGMLLVASGRLG), 91-111 (VCIVGIVLASISSGVGEITFL), 131-151 (GAGLAGSFLYMLLTSILKIPV), 154-174 (SLLLFSILPIGFLLYFTLQVE), 234-254 (VLVVPYMIPLSTVYLFEYLIN), 281-300 (IYVAYGTLYQLGVFISRSSG), 307-329 (GLYLLSVLQFLNLVILLIQSWYY), and 334-356 (VWVIMAIVLYEGLLGGASYVNSF).

It belongs to the battenin family.

It localises to the vacuole membrane. Functionally, involved in vacuolar transport and vacuole pH homeostasis. Also required for cytokinesis. The polypeptide is Protein BTN1 (BTN1) (Eremothecium gossypii (strain ATCC 10895 / CBS 109.51 / FGSC 9923 / NRRL Y-1056) (Yeast)).